The following is a 190-amino-acid chain: Potassium-transporting ATPase KdpC subunit (190 aa).

Residues 10-30 form a helical membrane-spanning segment; the sequence is TFIFLLLITGGVYPLLTTVLG.

This sequence belongs to the KdpC family. As to quaternary structure, the system is composed of three essential subunits: KdpA, KdpB and KdpC.

The protein localises to the cell inner membrane. Functionally, part of the high-affinity ATP-driven potassium transport (or Kdp) system, which catalyzes the hydrolysis of ATP coupled with the electrogenic transport of potassium into the cytoplasm. This subunit acts as a catalytic chaperone that increases the ATP-binding affinity of the ATP-hydrolyzing subunit KdpB by the formation of a transient KdpB/KdpC/ATP ternary complex. The sequence is that of Potassium-transporting ATPase KdpC subunit from Escherichia coli (strain 55989 / EAEC).